A 427-amino-acid polypeptide reads, in one-letter code: Protein king tubby 1 (427 aa).

Positions 48–174 (SPSNPDQIIS…ASGHNDAEGD (127 aa)) are disordered. The segment covering 57–86 (SSSGSPTTVTATGTGTTTTTGSVTTTPTSP) has biased composition (low complexity).

Belongs to the TUB family.

The protein localises to the cytoplasm. It is found in the nucleus. The polypeptide is Protein king tubby 1 (king-tubby1) (Culex quinquefasciatus (Southern house mosquito)).